A 187-amino-acid chain; its full sequence is Accessory gene regulator protein B (187 aa).

The next 5 membrane-spanning stretches (helical) occupy residues leucine 49–isoleucine 69, phenylalanine 82–phenylalanine 102, threonine 107–alanine 127, tyrosine 143–tyrosine 163, and threonine 164–serine 184.

Belongs to the AgrB family.

The protein localises to the cell membrane. Its function is as follows. Essential for the production of a quorum sensing system signal molecule, the autoinducing peptide (AIP). This quorum sensing system is responsible for the regulation of the expression of virulence factor genes. Involved in the proteolytic processing of AgrD, the precursor of AIP. This Staphylococcus aureus (strain MRSA252) protein is Accessory gene regulator protein B.